Here is a 586-residue protein sequence, read N- to C-terminus: Aspartate--tRNA(Asp/Asn) ligase (586 aa).

An L-aspartate-binding site is contributed by Glu-175. The interval 199–202 (QIFK) is aspartate. Residue Arg-221 coordinates L-aspartate. ATP is bound by residues 221 to 223 (RDE) and Gln-230. An L-aspartate-binding site is contributed by His-448. Residue Glu-482 participates in ATP binding. Residue Arg-489 participates in L-aspartate binding. 534–537 (GVDR) lines the ATP pocket.

It belongs to the class-II aminoacyl-tRNA synthetase family. Type 1 subfamily. As to quaternary structure, homodimer.

The protein resides in the cytoplasm. The catalysed reaction is tRNA(Asx) + L-aspartate + ATP = L-aspartyl-tRNA(Asx) + AMP + diphosphate. Its function is as follows. Aspartyl-tRNA synthetase with relaxed tRNA specificity since it is able to aspartylate not only its cognate tRNA(Asp) but also tRNA(Asn). Reaction proceeds in two steps: L-aspartate is first activated by ATP to form Asp-AMP and then transferred to the acceptor end of tRNA(Asp/Asn). In Syntrophomonas wolfei subsp. wolfei (strain DSM 2245B / Goettingen), this protein is Aspartate--tRNA(Asp/Asn) ligase.